The primary structure comprises 146 residues: Nitric oxide reductase subunit C (146 aa).

A helical; Signal-anchor transmembrane segment spans residues 13–29; sequence IYFGGSVFFFLVFLGLT. Residues cysteine 61, cysteine 64, and histidine 65 each coordinate heme c.

As to quaternary structure, heterodimer of cytochromes b (large subunit) and c (small subunit).

Its subcellular location is the cell membrane. Component of the anaerobic respiratory chain that transforms nitrate to dinitrogen (denitrification). In Stutzerimonas stutzeri (Pseudomonas stutzeri), this protein is Nitric oxide reductase subunit C (norC).